The following is a 320-amino-acid chain: tRNA U34 carboxymethyltransferase (320 aa).

Carboxy-S-adenosyl-L-methionine is bound by residues Lys89, Trp103, Lys108, Gly128, 150–152 (DPT), 179–180 (LE), Met194, Tyr198, and Arg313.

The protein belongs to the class I-like SAM-binding methyltransferase superfamily. CmoB family. In terms of assembly, homotetramer.

It catalyses the reaction carboxy-S-adenosyl-L-methionine + 5-hydroxyuridine(34) in tRNA = 5-carboxymethoxyuridine(34) in tRNA + S-adenosyl-L-homocysteine + H(+). Its function is as follows. Catalyzes carboxymethyl transfer from carboxy-S-adenosyl-L-methionine (Cx-SAM) to 5-hydroxyuridine (ho5U) to form 5-carboxymethoxyuridine (cmo5U) at position 34 in tRNAs. The sequence is that of tRNA U34 carboxymethyltransferase from Haemophilus ducreyi (strain 35000HP / ATCC 700724).